Consider the following 353-residue polypeptide: Melanin-concentrating hormone receptor 1 (353 aa).

The Extracellular portion of the chain corresponds to 1–45 (MDLQASLLSTGPNASNISDGQDNFTLAGPPPRTRSVSYINIIMPS). Residues asparagine 13, asparagine 16, and asparagine 23 are each glycosylated (N-linked (GlcNAc...) asparagine). Residues 46–66 (VFGTICLLGIVGNSTVIFAVV) form a helical membrane-spanning segment. Topologically, residues 67 to 79 (KKSKLHWCSNVPD) are cytoplasmic. A helical transmembrane segment spans residues 80–100 (IFIINLSVVDLLFLLGMPFMI). Residues 101-116 (HQLMGNGVWHFGETMC) are Extracellular-facing. A disulfide bridge connects residues cysteine 116 and cysteine 194. Residues 117–139 (TLITAMDANSQFTSTYILTAMAI) form a helical membrane-spanning segment. Topologically, residues 140 to 161 (DRYLATVHPISSTKFRKPSMAT) are cytoplasmic. Residues 162-182 (LVICLLWALSFISITPVWLYA) form a helical membrane-spanning segment. At 183–204 (RLIPFPGGAVGCGIRLPNPDTD) the chain is on the extracellular side. A helical membrane pass occupies residues 205–225 (LYWFTLYQFFLAFALPFVVIT). The Cytoplasmic portion of the chain corresponds to 226-256 (AAYVKILQRMTSSVAPASQRSIRLRTKRVTR). The helical transmembrane segment at 257 to 277 (TAIAICLVFFVCWAPYYVLQL) threads the bilayer. The Extracellular segment spans residues 278 to 294 (TQLSISRPTLTFVYLYN). Residues 295 to 315 (AAISLGYANSCLNPFVYIVLC) traverse the membrane as a helical segment. The Cytoplasmic portion of the chain corresponds to 316-353 (ETFRKRLVLSVKPAAQGQLRTVSNAQTADEERTESKGT).

It belongs to the G-protein coupled receptor 1 family. Interacts with NCDN. Expressed predominantly in the brain. Expression in brain is negatively regulated by leptin. Also found in the epithelium of the tongue and kidney.

It is found in the cell membrane. Its function is as follows. Receptor for melanin-concentrating hormone, coupled to both G proteins that inhibit adenylyl cyclase and G proteins that activate phosphoinositide hydrolysis. This chain is Melanin-concentrating hormone receptor 1, found in Mus musculus (Mouse).